A 428-amino-acid chain; its full sequence is Dihydroorotase (428 aa).

Zn(2+) contacts are provided by His59 and His61. Substrate contacts are provided by residues 61–63 and Asn93; that span reads HFR. Asp151, His178, and His231 together coordinate Zn(2+). Asn277 is a binding site for substrate. Asp304 contacts Zn(2+). Residue Asp304 is part of the active site. Residues His308 and 322–323 each bind substrate; that span reads FG.

This sequence belongs to the metallo-dependent hydrolases superfamily. DHOase family. Class I DHOase subfamily. As to quaternary structure, homodimer. Zn(2+) is required as a cofactor.

It catalyses the reaction (S)-dihydroorotate + H2O = N-carbamoyl-L-aspartate + H(+). It participates in pyrimidine metabolism; UMP biosynthesis via de novo pathway; (S)-dihydroorotate from bicarbonate: step 3/3. Functionally, catalyzes the reversible cyclization of carbamoyl aspartate to dihydroorotate. The sequence is that of Dihydroorotase from Bacillus subtilis (strain 168).